The chain runs to 249 residues: Methionine aminopeptidase 2 (249 aa).

H76 is a binding site for substrate. A divalent metal cation contacts are provided by D94, D105, and H168. H175 is a substrate binding site. E202 and E233 together coordinate a divalent metal cation.

Monomer. Requires Co(2+) as cofactor. Zn(2+) serves as cofactor. The cofactor is Mn(2+). Fe(2+) is required as a cofactor.

It is found in the cytoplasm. The enzyme catalyses Release of N-terminal amino acids, preferentially methionine, from peptides and arylamides.. Its function is as follows. Removes the N-terminal methionine from nascent proteins. The N-terminal methionine is often cleaved when the second residue in the primary sequence is small and uncharged (Met-Ala-, Cys, Gly, Pro, Ser, Thr, or Val). Requires deformylation of the N(alpha)-formylated initiator methionine before it can be hydrolyzed. This Bacillus subtilis (strain 168) protein is Methionine aminopeptidase 2.